The chain runs to 416 residues: CinA-like protein (416 aa).

Belongs to the CinA family.

The chain is CinA-like protein from Synechocystis sp. (strain ATCC 27184 / PCC 6803 / Kazusa).